The chain runs to 211 residues: Degradation in the endoplasmic reticulum protein 1 (211 aa).

Position 1 is an N-acetylmethionine (methionine 1). The Cytoplasmic segment spans residues 1–14; that stretch reads MDAVILNLLGDIPL. The chain crosses the membrane as a helical span at residues 15–32; it reads VTRLWTIGCLVLSGLTSL. Over 33 to 67 the chain is Lumenal; that stretch reads RIVDPGKVVYSYDLVFKKGQYGRLLYSIFDYGAFN. Residues 68–85 form a helical membrane-spanning segment; that stretch reads WISMINIFVSANHLSTLE. Residues 86–92 are Cytoplasmic-facing; that stretch reads NSFNLRR. The helical transmembrane segment at 93–109 threads the bilayer; it reads KFCWIIFLLLVILVKMT. Topologically, residues 110 to 117 are lumenal; it reads SIEQPAAS. A helical transmembrane segment spans residues 118–133; it reads LGVLLHENLVYYELKK. The Cytoplasmic segment spans residues 134 to 149; that stretch reads NGNQMNVRFFGAIDVS. A helical membrane pass occupies residues 150 to 165; it reads PSIFPIYMNAVMYFVY. Over 166–168 the chain is Lumenal; the sequence is KRS. The helical transmembrane segment at 169-189 threads the bilayer; the sequence is WLEIAMNFMPGHVIYYMDDII. The Cytoplasmic portion of the chain corresponds to 190–211; it reads GKIYGIDLCKSPYDWFRNTETP.

It belongs to the derlin family. Component of the HRD1 ubiquitin ligase complex which contains the E3 ligase HRD1, its cofactors HRD3, USA1 and DER1, substrate recruiting factor YOS9 and CDC48-binding protein UBX2. Within the complex, interacts with USA1 (via C-terminus). In ERAD-L, HRD3 and YOS9 jointly bind misfolded glycoproteins in the endoplasmic reticulum (ER) lumen. Movement of ERAD-L substrates through the ER membrane is facilitated by HRD1 and DER1 which have lateral gates facing each other and which distort the membrane region between the lateral gates, making it much thinner than a normal phospholipid bilayer. Substrates insert into the membrane as a hairpin loop with one strand interacting with DER1 and the other with HRD1. The HRD1 complex interacts with the heterotrimeric CDC48-NPL4-UFD1 ATPase complex which is recruited by UBX2 via its interaction with CDC48 and which moves ubiquitinated substrates to the cytosol for targeting to the proteasome. Post-translationally, N-terminally acetylated by acetyltransferase NatB which enhances DER1 stability and is required for ERAD-L function.

Its subcellular location is the endoplasmic reticulum membrane. Its function is as follows. Component of the endoplasmic reticulum-associated degradation (ERAD) pathway. Specifically required for the ERAD-L pathway which mediates the degradation of proteins with misfolded lumenal domains within the endoplasmic reticulum (ER). Facilitates retrotranslocation of misfolded proteins from the ER lumen through the ER membrane in conjunction with HRD1. Both proteins have lateral gates facing each other and distort the membrane region between the lateral gates, making it much thinner than a normal phospholipid bilayer. Substrates insert into the membrane as a hairpin loop with one strand interacting with DER1 and the other with HRD1. The protein is Degradation in the endoplasmic reticulum protein 1 (DER1) of Saccharomyces cerevisiae (strain ATCC 204508 / S288c) (Baker's yeast).